Consider the following 1374-residue polypeptide: Probable multidrug resistance-associated protein lethal(2)03659 (1374 aa).

The segment at 1-40 (MDKQPVLEPTFDSVSERENTSIEESSLLENNGFDHRNKDE) is disordered. The next 6 helical transmembrane spans lie at 159–179 (LLRV…VVEL), 205–225 (AGFY…MILT), 282–302 (YTVH…YLMY), 305–325 (IGIS…IQMY), 404–424 (IFLS…EIAF), and 426–446 (ITAY…SAII). The region spanning 168-449 (GFPGLAIFVV…YVPSAIIQTA (282 aa)) is the ABC transmembrane type-1 1 domain. The tract at residues 466 to 492 (ELGSSDKSEGPSKDTVPGNPPSNNNEA) is disordered. The region spanning 499–722 (ISIRDLKAKW…GLITGLGSLS (224 aa)) is the ABC transporter 1 domain. 534–541 (GLTGSGKS) contacts ATP. N561 carries N-linked (GlcNAc...) asparagine glycosylation. The interval 723–766 (KTDKAKTEEQEPLNLNSPDNKNEVTPIKENSEQTVGGSSSGKEH) is disordered. 5 helical membrane-spanning segments follow: residues 787–807 (GGGL…QVAV), 845–865 (LIII…FNIA), 913–933 (VVLV…IVIA), 938–958 (LLLV…NLYL), and 1025–1045 (YCMN…FFAF). Residues 793–1079 (FLVMLSSSVL…GVRQTAELEN (287 aa)) enclose the ABC transmembrane type-1 2 domain. Residues 1119–1352 (FKELNLRYTP…SDSKVFHNLV (234 aa)) form the ABC transporter 2 domain. 1153–1160 (GRTGAGKS) lines the ATP pocket. N1254 and N1353 each carry an N-linked (GlcNAc...) asparagine glycan.

It belongs to the ABC transporter superfamily. ABCC family. Conjugate transporter (TC 3.A.1.208) subfamily. In terms of tissue distribution, uniform expression in embryos.

The protein resides in the membrane. Functionally, vital for development. The polypeptide is Probable multidrug resistance-associated protein lethal(2)03659 (l(2)03659) (Drosophila melanogaster (Fruit fly)).